Consider the following 504-residue polypeptide: MAAQRRSLLQSEQQPSWTDDLPLCHLSGVGSASNRSYSADGKGTESHPPEDSWLKFRSENNCFLYGVFNGYDGNRVTNFVAQRLSAELLLGQLNAEHAEADVRRVLLQAFDVVERSFLESIDDALAEKASLQSQLPEGVPQHQLPPQYQKILERLKTLEREISGGAMAVVAVLLNNKLYVANVGTNRALLCKSTVDGLQVTQLNVDHTTENEDELFRLSQLGLDAGKIKQVGIICGQESTRRIGDYKVKYGYTDIDLLSAAKSKPIIAEPEIHGAQPLDGVTGFLVLMSEGLYKALEAAHGPGQANQEIAAMIDTEFAKQTSLDAVAQAVVDRVKRIHSDTFASGGERARFCPRHEDMTLLVRNFGYPLGEMSQPTPSPAPAAGGRVYPVSVPYSSAQSTSKTSVTLSLVMPSQGQMVNGAHSASTLDEATPTLTNQSPTLTLQSTNTHTQSSSSSSDGGLFRSRPAHSLPPGEDGRVEPYVDFAEFYRLWSVDHGEQSVVTAP.

Positions 1–22 are disordered; sequence MAAQRRSLLQSEQQPSWTDDLP. Residue serine 7 is modified to Phosphoserine. The span at 7–17 shows a compositional bias: polar residues; the sequence is SLLQSEQQPSW. The PPM-type phosphatase domain occupies 28–365; it reads GVGSASNRSY…EDMTLLVRNF (338 aa). Serine 378 is subject to Phosphoserine. O-linked (GlcNAc) serine glycosylation occurs at serine 395. Serine 423 bears the Phosphoserine; by MAPK14 mark. A compositionally biased stretch (polar residues) spans 430-439; the sequence is ATPTLTNQSP. Residues 430–478 form a disordered region; that stretch reads ATPTLTNQSPTLTLQSTNTHTQSSSSSSDGGLFRSRPAHSLPPGEDGRV. Phosphothreonine; by MAPK14 is present on threonine 431. A Phosphoserine; by MAPK14 modification is found at serine 438. A compositionally biased stretch (low complexity) spans 440–457; sequence TLTLQSTNTHTQSSSSSS. Threonine 442 bears the Phosphothreonine mark.

As to quaternary structure, interacts with XIAP and BIRC7. Interacts with TRAF6 and MAP3K7; during IL-1 signaling. Identified in the TRIKA2 complex composed of MAP3K7, TAB1 and TAB2. Interacts with TRAF6 and MAPK14; these interactions allow MAPK14 autophosphorylation. Interacts with STING1; interaction takes place following cGAMP activation and promotes TAB1 recruitment to the endoplasmic reticulum, triggering MAP3K7/TAK1 activation and STING1 phosphorylation. Phosphorylated at all three sites Ser-423, Thr-431 and Ser-438 by MAPK14 when cells were exposed to cellular stresses, or stimulated with TNF-alpha, IL1 or LPS. These phosphorylations inhibit TAK1 activation by a feedback control mechanism. Dephosphorylated by DUSP14 at Ser-438, leading to TAB1-MAP3K7/TAK1 complex inactivation in T-cells. In terms of processing, ubiquitinated by MAP3K1 with 'Lys-63'-linked polyubiquitin; leading to activation of TAK1 and of JNK and p38 MAP kinases following EGF and TGF-beta stimulation. Ubiquitinated by ITCH with 'Lys-48'-linked polyubiquitin; leading to proteasomal degradation. Ubiquitinated by RNF114 during maternal-to-zygotic transition; leading to degradation. Post-translationally, (Microbial infection) Deubiquitinated by Y.enterocolitica YopP. O-GlcNAcylated at Ser-395 by OGT is required for full MAP3K7/TAK1 activation upon stimulation with IL-1 or osmotic stress. Deglycosylated at Ser-395 by OGA. In terms of tissue distribution, ubiquitous.

The protein resides in the cytoplasm. Its subcellular location is the cytosol. The protein localises to the endoplasmic reticulum membrane. Key adapter protein that plays an essential role in JNK and NF-kappa-B activation and proinflammatory cytokines production in response to stimulation with TLRs and cytokines. Mechanistically, associates with the catalytic domain of MAP3K7/TAK1 to trigger MAP3K7/TAK1 autophosphorylation leading to its full activation. Similarly, associates with MAPK14 and triggers its autophosphorylation and subsequent activation. In turn, MAPK14 phosphorylates TAB1 and inhibits MAP3K7/TAK1 activation in a feedback control mechanism. Also plays a role in recruiting MAPK14 to the TAK1 complex for the phosphorylation of the TAB2 and TAB3 regulatory subunits. The protein is TGF-beta-activated kinase 1 and MAP3K7-binding protein 1 (TAB1) of Homo sapiens (Human).